The following is a 68-amino-acid chain: U19-ctenitoxin-Pn1a (68 aa).

Residue Gln1 is modified to Pyrrolidone carboxylic acid. Cystine bridges form between Cys8–Cys19, Cys13–Cys28, Cys18–Cys51, Cys38–Cys59, and Cys53–Cys65.

In terms of tissue distribution, expressed by the venom gland.

The protein localises to the secreted. In terms of biological role, non-toxic to mice and insects. The sequence is that of U19-ctenitoxin-Pn1a from Phoneutria nigriventer (Brazilian armed spider).